Reading from the N-terminus, the 52-residue chain is Eukaryotic translation initiation factor 5A (52 aa).

The residue at position 42 (Lys42) is a Hypusine.

This sequence belongs to the eIF-5A family. In terms of processing, lys-42 undergoes hypusination, a unique post-translational modification that consists in the addition of a butylamino group from spermidine to lysine side chain, leading to the formation of the unusual amino acid hypusine. eIF-5As are the only known proteins to undergo this modification, which is essential for their function.

The protein localises to the cytoplasm. In terms of biological role, translation factor that promotes translation elongation and termination, particularly upon ribosome stalling at specific amino acid sequence contexts. Binds between the exit (E) and peptidyl (P) site of the ribosome and promotes rescue of stalled ribosome: specifically required for efficient translation of polyproline-containing peptides as well as other motifs that stall the ribosome. Acts as a ribosome quality control (RQC) cofactor by joining the RQC complex to facilitate peptidyl transfer during CAT tailing step. The chain is Eukaryotic translation initiation factor 5A from Schistosoma mansoni (Blood fluke).